The chain runs to 389 residues: Putative serine/threonine-protein kinase (389 aa).

Residues 15-356 (YRIEKLINRG…LMVSNYLPWY (342 aa)) form the Protein kinase domain. D164 acts as the Proton acceptor in catalysis.

This sequence belongs to the protein kinase superfamily. Ser/Thr protein kinase family.

The catalysed reaction is L-seryl-[protein] + ATP = O-phospho-L-seryl-[protein] + ADP + H(+). The enzyme catalyses L-threonyl-[protein] + ATP = O-phospho-L-threonyl-[protein] + ADP + H(+). This Mycoplasma pneumoniae (strain ATCC 29342 / M129 / Subtype 1) (Mycoplasmoides pneumoniae) protein is Putative serine/threonine-protein kinase.